Here is a 482-residue protein sequence, read N- to C-terminus: Protein translocase subunit SecY (482 aa).

A disordered region spans residues 1–22 (MVIKKPANKVDKKSTFKSSNKK). Helical transmembrane passes span 41–61 (ILFTLLALIIIRLGVYITVPG), 92–112 (FSILALGVSPYITASIIVQLL), 137–157 (LTKIIMIPFALMQAEATIFTL), 177–197 (AFYYILIPLVMLGGSFFMLWI), 201–221 (ITIKGIGNGISIVIFIGIIIS), 243–263 (IFFSGLLNFMIYISVFLLVIL), 303–323 (VIPVIFASAIISTPITISQII), 342–362 (FNTWWGISIFGILIVLFTFLY), 405–425 (VVGSVFLAIIALLPYVISKLT), and 426–446 (QLPSNLAIGGTGLIICISVAI).

The protein belongs to the SecY/SEC61-alpha family. Component of the Sec protein translocase complex. Heterotrimer consisting of SecY, SecE and SecG subunits. The heterotrimers can form oligomers, although 1 heterotrimer is thought to be able to translocate proteins. Interacts with the ribosome. Interacts with SecDF, and other proteins may be involved. Interacts with SecA.

It is found in the cell membrane. In terms of biological role, the central subunit of the protein translocation channel SecYEG. Consists of two halves formed by TMs 1-5 and 6-10. These two domains form a lateral gate at the front which open onto the bilayer between TMs 2 and 7, and are clamped together by SecE at the back. The channel is closed by both a pore ring composed of hydrophobic SecY resides and a short helix (helix 2A) on the extracellular side of the membrane which forms a plug. The plug probably moves laterally to allow the channel to open. The ring and the pore may move independently. This Mycoplasma capricolum subsp. capricolum (strain California kid / ATCC 27343 / NCTC 10154) protein is Protein translocase subunit SecY.